A 434-amino-acid polypeptide reads, in one-letter code: Enolase (434 aa).

Glutamine 163 is a (2R)-2-phosphoglycerate binding site. Residue glutamate 205 is the Proton donor of the active site. Positions 242, 291, and 318 each coordinate Mg(2+). 4 residues coordinate (2R)-2-phosphoglycerate: lysine 343, arginine 372, serine 373, and lysine 394. Catalysis depends on lysine 343, which acts as the Proton acceptor.

It belongs to the enolase family. It depends on Mg(2+) as a cofactor.

The protein resides in the cytoplasm. The protein localises to the secreted. It localises to the cell surface. The enzyme catalyses (2R)-2-phosphoglycerate = phosphoenolpyruvate + H2O. It participates in carbohydrate degradation; glycolysis; pyruvate from D-glyceraldehyde 3-phosphate: step 4/5. Functionally, catalyzes the reversible conversion of 2-phosphoglycerate (2-PG) into phosphoenolpyruvate (PEP). It is essential for the degradation of carbohydrates via glycolysis. The chain is Enolase from Streptococcus thermophilus (strain CNRZ 1066).